The sequence spans 848 residues: Beta-galactosidase 13 (848 aa).

Positions M1–S27 are cleaved as a signal peptide. Residue N107 is glycosylated (N-linked (GlcNAc...) asparagine). E200 (proton donor) is an active-site residue. E271 serves as the catalytic Nucleophile. 7 N-linked (GlcNAc...) asparagine glycosylation sites follow: N272, N303, N376, N398, N782, N787, and N817. In terms of domain architecture, SUEL-type lectin spans D754–G843.

The protein belongs to the glycosyl hydrolase 35 family. As to expression, ubiquitous, with higher expression levels in roots, flowers and siliques.

It localises to the secreted. Its subcellular location is the extracellular space. The protein localises to the apoplast. It catalyses the reaction Hydrolysis of terminal non-reducing beta-D-galactose residues in beta-D-galactosides.. The polypeptide is Beta-galactosidase 13 (BGAL13) (Arabidopsis thaliana (Mouse-ear cress)).